A 202-amino-acid polypeptide reads, in one-letter code: Recoverin (202 aa).

Residue Gly2 is the site of N-myristoyl glycine attachment. Cys39 carries the cysteine sulfenic acid (-SOH) modification. EF-hand domains lie at 41–59, 61–96, 97–132, and 147–182; these read SGRI…FFPE, DPKA…TSAG, KTNQ…IFKM, and TPEK…NKEI. Ca(2+)-binding residues include Asp74, Asn76, Asp78, Thr80, Glu85, Asp110, Asp112, Asn114, and Glu121. The segment at 189–192 is interaction with GRK1; the sequence is EPRK.

Belongs to the recoverin family. Homodimer; disulfide-linked. Homodimerization is caused by prolonged intense illumination. May form a complex composed of RHO, GRK1 and RCVRN in a Ca(2+)-dependent manner; RCVRN prevents the interaction between GRK1 and RHO. Interacts (via C-terminus) with GRK1 (via N-terminus); the interaction is Ca(2+)-dependent. In terms of processing, the N-terminal glycine is linked to one of four different types of acyl groups. The most abundant is myristoleate (14:1), but 14:0, 14:2, and 12:0 acyl residues are also present. The Ca(2+) induced exposure of the myristoyl group, known as the calcium-myristoyl switch, promotes RCVRN binding to the photoreceptor cell membranes only when intracellular Ca(2+) concentration is high. Post-translationally, oxidation on Cys-39 occurs in response to prolonged intense illumination and results in the formation of disulfide homodimers, and to a lesser extent disulfide-linked heterodimers.

The protein resides in the photoreceptor inner segment. The protein localises to the cell projection. It is found in the cilium. It localises to the photoreceptor outer segment. Its subcellular location is the photoreceptor outer segment membrane. The protein resides in the perikaryon. Its function is as follows. Acts as a calcium sensor and regulates phototransduction of cone and rod photoreceptor cells. Modulates light sensitivity of cone photoreceptor in dark and dim conditions. In response to high Ca(2+) levels induced by low light levels, prolongs RHO/rhodopsin activation in rod photoreceptor cells by binding to and inhibiting GRK1-mediated phosphorylation of RHO/rhodopsin. Plays a role in scotopic vision/enhances vision in dim light by enhancing signal transfer between rod photoreceptors and rod bipolar cells. Improves rod photoreceptor sensitivity in dim light and mediates response of rod photoreceptors to facilitate detection of change and motion in bright light. The protein is Recoverin (RCVRN) of Canis lupus familiaris (Dog).